The following is a 1249-amino-acid chain: Myosin-1 (1249 aa).

Residues 1–42 form a disordered region; sequence MGHSRRPAGGEKKSRGFGRSKAVADVGDGRQTGGKPQVKKAT. A Myosin motor domain is found at 51-730; it reads IGVSDLTLLS…TLFALEAMRD (680 aa). 144–151 is a binding site for ATP; sequence GESGAGKT. A Phosphoserine modification is found at serine 372. The actin-binding stretch occupies residues 419 to 501; the sequence is SIGILDIYGF…PGVFAALNDA (83 aa). IQ domains follow at residues 734-754 and 755-780; these read HNMA…RTEC and AIRI…QGHQ. Positions 788–978 constitute a TH1 domain; that stretch reads RRRMSLLGSR…TIHTGPGEPA (191 aa). 2 disordered regions span residues 962-1079 and 1126-1249; these read DDSY…PKKP and WTPE…DDDW. Pro residues predominate over residues 1021–1035; that stretch reads AAQPLPRATPQPAEP. Residues 1036-1051 show a composition bias toward low complexity; that stretch reads QPAARAVPQPVAAVAA. Pro residues-rich tracts occupy residues 1064–1077 and 1139–1150; these read APPP…PAPK and TPKPAPPPPPAA. Positions 1076–1137 constitute an SH3 domain; that stretch reads PKKPTAKVLY…PEAYLEEQVA (62 aa). Positions 1151 to 1169 are enriched in low complexity; it reads PRSTPAPATNGAAAAAKAK. A compositionally biased stretch (polar residues) spans 1200-1221; that stretch reads VSMNSHDSSGGSGRGTPNSMSN. The segment covering 1222-1231 has biased composition (low complexity); that stretch reads ASLAGGLAEA.

The protein belongs to the TRAFAC class myosin-kinesin ATPase superfamily. Myosin family. Phosphorylation of the TEDS site (Ser-372) is required for the polarization of the actin cytoskeleton. Phosphorylation probably activates the myosin-I ATPase activity.

It is found in the cytoplasm. The protein resides in the cytoskeleton. It localises to the actin patch. Type-I myosin implicated in the organization of the actin cytoskeleton. Required for proper actin cytoskeleton polarization. At the cell cortex, assembles in patch-like structures together with proteins from the actin-polymerizing machinery and promotes actin assembly. Functions as actin nucleation-promoting factor (NPF) for the Arp2/3 complex. Plays an important role in polarized growth, spore germination, hyphal morphogenesis, and septal wall formation. This chain is Myosin-1 (myoA), found in Aspergillus fumigatus (strain ATCC MYA-4609 / CBS 101355 / FGSC A1100 / Af293) (Neosartorya fumigata).